Consider the following 323-residue polypeptide: ATP synthase gamma chain (323 aa).

This sequence belongs to the ATPase gamma chain family. F-type ATPases have 2 components, CF(1) - the catalytic core - and CF(0) - the membrane proton channel. CF(1) has five subunits: alpha(3), beta(3), gamma(1), delta(1), epsilon(1). CF(0) has three main subunits: a, b and c.

Its subcellular location is the cell inner membrane. Produces ATP from ADP in the presence of a proton gradient across the membrane. The gamma chain is believed to be important in regulating ATPase activity and the flow of protons through the CF(0) complex. The chain is ATP synthase gamma chain from Rickettsia africae (strain ESF-5).